A 518-amino-acid chain; its full sequence is Bifunctional enzyme NanE/NanK (518 aa).

The manNAc-6-P epimerase stretch occupies residues 1 to 234; the sequence is MCRVQGMIEE…DAVESAAKPS (234 aa). Positions 235-518 are manNAc kinase; that stretch reads SPVLAFDIGG…VADLAATYFS (284 aa). ATP contacts are provided by residues 239-246 and 365-372; these read AFDIGGTK and GIGGGIVL.

It in the N-terminal section; belongs to the NanE family. This sequence in the C-terminal section; belongs to the ROK (NagC/XylR) family. NanK subfamily.

The enzyme catalyses an N-acyl-D-glucosamine 6-phosphate = an N-acyl-D-mannosamine 6-phosphate. It catalyses the reaction an N-acyl-D-mannosamine + ATP = an N-acyl-D-mannosamine 6-phosphate + ADP + H(+). It functions in the pathway amino-sugar metabolism; N-acetylneuraminate degradation; D-fructose 6-phosphate from N-acetylneuraminate: step 2/5. The protein operates within amino-sugar metabolism; N-acetylneuraminate degradation; D-fructose 6-phosphate from N-acetylneuraminate: step 3/5. In terms of biological role, converts N-acetylmannosamine-6-phosphate (ManNAc-6-P) to N-acetylglucosamine-6-phosphate (GlcNAc-6-P). Functionally, catalyzes the phosphorylation of N-acetylmannosamine (ManNAc) to ManNAc-6-P. This is Bifunctional enzyme NanE/NanK (nanEK) from Brucella melitensis biotype 1 (strain ATCC 23456 / CCUG 17765 / NCTC 10094 / 16M).